A 463-amino-acid chain; its full sequence is Fumarate hydratase class II (463 aa).

Substrate is bound by residues 97 to 99 (SGT), 128 to 131 (HPND), 138 to 140 (SSN), and T186. H187 acts as the Proton donor/acceptor in catalysis. The active site involves S317. Residues S318 and 323–325 (KVN) contribute to the substrate site.

This sequence belongs to the class-II fumarase/aspartase family. Fumarase subfamily. As to quaternary structure, homotetramer.

Its subcellular location is the cytoplasm. The catalysed reaction is (S)-malate = fumarate + H2O. It participates in carbohydrate metabolism; tricarboxylic acid cycle; (S)-malate from fumarate: step 1/1. Involved in the TCA cycle. Catalyzes the stereospecific interconversion of fumarate to L-malate. This is Fumarate hydratase class II from Helicobacter pylori (strain ATCC 700392 / 26695) (Campylobacter pylori).